Consider the following 287-residue polypeptide: Large ribosomal subunit protein uL2 (287 aa).

The interval 221–287 is disordered; the sequence is RGSVMNPCDH…SKRSRGGRDS (67 aa). Residues 258–287 show a composition bias toward basic residues; sequence KTRKKNKPSNKLVVRRRRRISKRSRGGRDS.

This sequence belongs to the universal ribosomal protein uL2 family. Part of the 50S ribosomal subunit. Forms a bridge to the 30S subunit in the 70S ribosome.

In terms of biological role, one of the primary rRNA binding proteins. Required for association of the 30S and 50S subunits to form the 70S ribosome, for tRNA binding and peptide bond formation. It has been suggested to have peptidyltransferase activity; this is somewhat controversial. Makes several contacts with the 16S rRNA in the 70S ribosome. The chain is Large ribosomal subunit protein uL2 from Prochlorococcus marinus (strain MIT 9215).